A 197-amino-acid chain; its full sequence is Imidazoleglycerol-phosphate dehydratase (197 aa).

This sequence belongs to the imidazoleglycerol-phosphate dehydratase family.

Its subcellular location is the cytoplasm. It catalyses the reaction D-erythro-1-(imidazol-4-yl)glycerol 3-phosphate = 3-(imidazol-4-yl)-2-oxopropyl phosphate + H2O. The protein operates within amino-acid biosynthesis; L-histidine biosynthesis; L-histidine from 5-phospho-alpha-D-ribose 1-diphosphate: step 6/9. This Bradyrhizobium sp. (strain ORS 278) protein is Imidazoleglycerol-phosphate dehydratase.